Consider the following 448-residue polypeptide: Tubulin beta-1 chain (448 aa).

The GTP site is built by Gln-11, Glu-69, Ser-138, Gly-142, Thr-143, Gly-144, Asn-204, and Asn-226. Glu-69 contacts Mg(2+). The segment at Ala-428–Ala-448 is disordered. Acidic residues predominate over residues Ile-430–Ala-448.

The protein belongs to the tubulin family. Dimer of alpha and beta chains. A typical microtubule is a hollow water-filled tube with an outer diameter of 25 nm and an inner diameter of 15 nM. Alpha-beta heterodimers associate head-to-tail to form protofilaments running lengthwise along the microtubule wall with the beta-tubulin subunit facing the microtubule plus end conferring a structural polarity. Microtubules usually have 13 protofilaments but different protofilament numbers can be found in some organisms and specialized cells. Mg(2+) is required as a cofactor.

Its subcellular location is the cytoplasm. It localises to the cytoskeleton. Its function is as follows. Tubulin is the major constituent of microtubules, a cylinder consisting of laterally associated linear protofilaments composed of alpha- and beta-tubulin heterodimers. Microtubules grow by the addition of GTP-tubulin dimers to the microtubule end, where a stabilizing cap forms. Below the cap, tubulin dimers are in GDP-bound state, owing to GTPase activity of alpha-tubulin. This Echinococcus multilocularis (Fox tapeworm) protein is Tubulin beta-1 chain (TUB-1).